The chain runs to 221 residues: Adenylate kinase (221 aa).

10 to 15 lines the ATP pocket; it reads GAGKGT. An NMP region spans residues 30-59; that stretch reads STGDMLRAAVKAGTPLGLEAKRFMDAGELV. Residues T31, R36, 57–59, 85–88, and Q92 each bind AMP; these read ELV and GFPR. The LID stretch occupies residues 122 to 159; that stretch reads GRRSHAASGRTYHVKFNPPKVEGVDDMTGEPLIQRDDD. Residues R123 and 132 to 133 contribute to the ATP site; that span reads TY. 2 residues coordinate AMP: R156 and R167. G207 contacts ATP.

This sequence belongs to the adenylate kinase family. As to quaternary structure, monomer.

The protein localises to the cytoplasm. The enzyme catalyses AMP + ATP = 2 ADP. The protein operates within purine metabolism; AMP biosynthesis via salvage pathway; AMP from ADP: step 1/1. Catalyzes the reversible transfer of the terminal phosphate group between ATP and AMP. Plays an important role in cellular energy homeostasis and in adenine nucleotide metabolism. This Paraburkholderia phytofirmans (strain DSM 17436 / LMG 22146 / PsJN) (Burkholderia phytofirmans) protein is Adenylate kinase.